We begin with the raw amino-acid sequence, 2300 residues long: Protein Ycf2 (2300 aa).

ATP is bound at residue 1642–1649 (GSIGTGRS).

This sequence belongs to the Ycf2 family.

It localises to the plastid. The protein resides in the chloroplast stroma. Functionally, probable ATPase of unknown function. Its presence in a non-photosynthetic plant (Epifagus virginiana) and experiments in tobacco indicate that it has an essential function which is probably not related to photosynthesis. The polypeptide is Protein Ycf2 (Vitis vinifera (Grape)).